The chain runs to 113 residues: uncharacterized protein (113 aa).

The transit peptide at 1 to 14 (MATRNALRIVSRRF) directs the protein to the mitochondrion. The disordered stretch occupies residues 41 to 79 (QKLARQGPGEQAAGSASEAKVAGATASASAESGPKVSED). Over residues 55-73 (SASEAKVAGATASASAESG) the composition is skewed to low complexity.

It localises to the mitochondrion. This is an uncharacterized protein from Arabidopsis thaliana (Mouse-ear cress).